A 782-amino-acid chain; its full sequence is Endonuclease MutS2 (782 aa).

Glycine 336 to threonine 343 is a binding site for ATP. The 76-residue stretch at leucine 707 to lysine 782 folds into the Smr domain.

It belongs to the DNA mismatch repair MutS family. MutS2 subfamily. As to quaternary structure, homodimer. Binds to stalled ribosomes, contacting rRNA.

In terms of biological role, endonuclease that is involved in the suppression of homologous recombination and thus may have a key role in the control of bacterial genetic diversity. Functionally, acts as a ribosome collision sensor, splitting the ribosome into its 2 subunits. Detects stalled/collided 70S ribosomes which it binds and splits by an ATP-hydrolysis driven conformational change. Acts upstream of the ribosome quality control system (RQC), a ribosome-associated complex that mediates the extraction of incompletely synthesized nascent chains from stalled ribosomes and their subsequent degradation. Probably generates substrates for RQC. The sequence is that of Endonuclease MutS2 from Staphylococcus aureus (strain MSSA476).